We begin with the raw amino-acid sequence, 153 residues long: MSNTKERTFICIKPDAVQRGLIGKIFERFEQRGYKLVAMKMLKATKSHLEIHYQELQGKPFFNDLVGYMSSGPVIAMVWEGLDVVKQARQMLGATNPLNSMPGTIRGDFSIQTGRNIVHGSDSLPSAEREITHWFKPEELCEWSSATATWVYE.

6 residues coordinate ATP: K13, F61, R89, T95, R106, and N116. H119 acts as the Pros-phosphohistidine intermediate in catalysis.

The protein belongs to the NDK family. As to quaternary structure, homohexamer. Mg(2+) is required as a cofactor.

The protein localises to the cytoplasm. The enzyme catalyses a 2'-deoxyribonucleoside 5'-diphosphate + ATP = a 2'-deoxyribonucleoside 5'-triphosphate + ADP. It carries out the reaction a ribonucleoside 5'-diphosphate + ATP = a ribonucleoside 5'-triphosphate + ADP. Its function is as follows. Major role in the synthesis of nucleoside triphosphates other than ATP. The ATP gamma phosphate is transferred to the NDP beta phosphate via a ping-pong mechanism, using a phosphorylated active-site intermediate. The polypeptide is Nucleoside diphosphate kinase (NDK) (Brugia malayi (Filarial nematode worm)).